Here is a 415-residue protein sequence, read N- to C-terminus: Serine hydroxymethyltransferase 2 (415 aa).

(6S)-5,6,7,8-tetrahydrofolate is bound by residues leucine 121 and 125–127 (GHL). Lysine 229 is modified (N6-(pyridoxal phosphate)lysine).

The protein belongs to the SHMT family. Homodimer. The cofactor is pyridoxal 5'-phosphate.

It is found in the cytoplasm. The enzyme catalyses (6R)-5,10-methylene-5,6,7,8-tetrahydrofolate + glycine + H2O = (6S)-5,6,7,8-tetrahydrofolate + L-serine. It functions in the pathway one-carbon metabolism; tetrahydrofolate interconversion. The protein operates within amino-acid biosynthesis; glycine biosynthesis; glycine from L-serine: step 1/1. Its function is as follows. Catalyzes the reversible interconversion of serine and glycine with tetrahydrofolate (THF) serving as the one-carbon carrier. This reaction serves as the major source of one-carbon groups required for the biosynthesis of purines, thymidylate, methionine, and other important biomolecules. Also exhibits THF-independent aldolase activity toward beta-hydroxyamino acids, producing glycine and aldehydes, via a retro-aldol mechanism. The polypeptide is Serine hydroxymethyltransferase 2 (Bordetella bronchiseptica (strain ATCC BAA-588 / NCTC 13252 / RB50) (Alcaligenes bronchisepticus)).